Here is a 180-residue protein sequence, read N- to C-terminus: Small ribosomal subunit protein uS4 (180 aa).

Residues Arg103–Ala174 form the S4 RNA-binding domain.

Belongs to the universal ribosomal protein uS4 family. In terms of assembly, part of the 30S ribosomal subunit. Contacts protein S5. The interaction surface between S4 and S5 is involved in control of translational fidelity.

One of the primary rRNA binding proteins, it binds directly to 16S rRNA where it nucleates assembly of the body of the 30S subunit. Its function is as follows. With S5 and S12 plays an important role in translational accuracy. The protein is Small ribosomal subunit protein uS4 of Pyrococcus horikoshii (strain ATCC 700860 / DSM 12428 / JCM 9974 / NBRC 100139 / OT-3).